Here is a 240-residue protein sequence, read N- to C-terminus: Tetrahydromethanopterin S-methyltransferase subunit A (240 aa).

Residues 1-218 lie on the Cytoplasmic side of the membrane; that stretch reads MVDKKEPASG…KFHSGVHAGK (218 aa). His85 is a binding site for 5-hydroxybenzimidazolylcob(I)amide. Residues 219 to 239 form a helical membrane-spanning segment; the sequence is IEGAMIGLTVTISLLGLLLLG. Arg240 is a topological domain (extracellular).

Belongs to the MtrA family. In terms of assembly, the complex is composed of 8 subunits; MtrA, MtrB, MtrC, MtrD, MtrE, MtrF, MtrG and MtrH. 5-hydroxybenzimidazolylcob(I)amide is required as a cofactor.

It is found in the cell membrane. It carries out the reaction 5-methyl-5,6,7,8-tetrahydromethanopterin + coenzyme M + 2 Na(+)(in) = 5,6,7,8-tetrahydromethanopterin + methyl-coenzyme M + 2 Na(+)(out). It functions in the pathway one-carbon metabolism; methanogenesis from CO(2); methyl-coenzyme M from 5,10-methylene-5,6,7,8-tetrahydromethanopterin: step 2/2. Functionally, part of a complex that catalyzes the formation of methyl-coenzyme M and tetrahydromethanopterin from coenzyme M and methyl-tetrahydromethanopterin. This is an energy-conserving, sodium-ion translocating step. In Methanosarcina acetivorans (strain ATCC 35395 / DSM 2834 / JCM 12185 / C2A), this protein is Tetrahydromethanopterin S-methyltransferase subunit A.